The chain runs to 541 residues: CTP synthase (541 aa).

The segment at 1 to 265 (MTRFIFITGG…DAVVCRHFGL (265 aa)) is amidoligase domain. Ser13 is a CTP binding site. UTP is bound at residue Ser13. 14-19 (SLGKGL) lines the ATP pocket. Tyr54 contributes to the L-glutamine binding site. Asp71 is an ATP binding site. The Mg(2+) site is built by Asp71 and Glu139. CTP is bound by residues 146-148 (DIE), 186-191 (KTKPTQ), and Lys222. UTP is bound by residues 186 to 191 (KTKPTQ) and Lys222. The Glutamine amidotransferase type-1 domain maps to 290–540 (TIAIVGKYIS…IAAAVRQSRL (251 aa)). Gly352 provides a ligand contact to L-glutamine. Catalysis depends on Cys379, which acts as the Nucleophile; for glutamine hydrolysis. L-glutamine is bound by residues 380 to 383 (FGMQ), Glu403, and Arg468. Catalysis depends on residues His513 and Glu515.

This sequence belongs to the CTP synthase family. Homotetramer.

It carries out the reaction UTP + L-glutamine + ATP + H2O = CTP + L-glutamate + ADP + phosphate + 2 H(+). The catalysed reaction is L-glutamine + H2O = L-glutamate + NH4(+). It catalyses the reaction UTP + NH4(+) + ATP = CTP + ADP + phosphate + 2 H(+). The protein operates within pyrimidine metabolism; CTP biosynthesis via de novo pathway; CTP from UDP: step 2/2. Allosterically activated by GTP, when glutamine is the substrate; GTP has no effect on the reaction when ammonia is the substrate. The allosteric effector GTP functions by stabilizing the protein conformation that binds the tetrahedral intermediate(s) formed during glutamine hydrolysis. Inhibited by the product CTP, via allosteric rather than competitive inhibition. In terms of biological role, catalyzes the ATP-dependent amination of UTP to CTP with either L-glutamine or ammonia as the source of nitrogen. Regulates intracellular CTP levels through interactions with the four ribonucleotide triphosphates. This chain is CTP synthase, found in Paramagnetospirillum magneticum (strain ATCC 700264 / AMB-1) (Magnetospirillum magneticum).